Consider the following 235-residue polypeptide: Large ribosomal subunit protein uL2 (235 aa).

Residues 197-218 (VAMNPVDHPHGGGEGKTSGGRH) form a disordered region.

This sequence belongs to the universal ribosomal protein uL2 family. As to quaternary structure, part of the 50S ribosomal subunit. Forms a bridge to the 30S subunit in the 70S ribosome.

In terms of biological role, one of the primary rRNA binding proteins. Required for association of the 30S and 50S subunits to form the 70S ribosome, for tRNA binding and peptide bond formation. It has been suggested to have peptidyltransferase activity; this is somewhat controversial. Makes several contacts with the 16S rRNA in the 70S ribosome. In Carsonella ruddii (strain PV), this protein is Large ribosomal subunit protein uL2 (rplB).